We begin with the raw amino-acid sequence, 442 residues long: ATP-dependent RNA helicase SUB2 (442 aa).

The Q motif motif lies at 59 to 87 (TGFRDFLLKGELLRAITDCGFEHPSEVQQ). In terms of domain architecture, Helicase ATP-binding spans 90–265 (IPTAILNVDV…KKFMRNPLEV (176 aa)). Residue 103–110 (AKSGLGKT) participates in ATP binding. Residues 212 to 215 (DECD) carry the DECD box motif. A Helicase C-terminal domain is found at 293–438 (KLNELLDSLE…EYPQGGVDSS (146 aa)).

It belongs to the DEAD box helicase family. DECD subfamily.

It localises to the nucleus. The enzyme catalyses ATP + H2O = ADP + phosphate + H(+). Its function is as follows. ATP-binding RNA helicase involved in transcription elongation and required for the export of mRNA out of the nucleus. SUB2 also plays a role in pre-mRNA splicing and spliceosome assembly. May be involved in rDNA and telomeric silencing, and maintenance of genome integrity. This chain is ATP-dependent RNA helicase SUB2 (SUB2), found in Ajellomyces capsulatus (strain NAm1 / WU24) (Darling's disease fungus).